The chain runs to 349 residues: NADH-quinone oxidoreductase subunit H (349 aa).

Transmembrane regions (helical) follow at residues 20–42 (WTLIKIVLIVAPMMLGVAYLTYF), 88–108 (GIFIIAPMLAIAPALAAWAVV), 123–143 (LLYIMAITSMGVYGIILSGWA), 167–187 (MGFSLICVLMVSNSLNLVEIV), 202–222 (FLSWNWLPLFPMFLVYLISGV), 249–269 (GMAFAVFFLAEYANMILVSAL), 284–304 (FLPDGILWLFAKMSAILFLFL), and 325–345 (VFVPICLIWLVVVGVWMMSPL).

It belongs to the complex I subunit 1 family. NDH-1 is composed of 14 different subunits. Subunits NuoA, H, J, K, L, M, N constitute the membrane sector of the complex.

It is found in the cell inner membrane. It carries out the reaction a quinone + NADH + 5 H(+)(in) = a quinol + NAD(+) + 4 H(+)(out). NDH-1 shuttles electrons from NADH, via FMN and iron-sulfur (Fe-S) centers, to quinones in the respiratory chain. The immediate electron acceptor for the enzyme in this species is believed to be ubiquinone. Couples the redox reaction to proton translocation (for every two electrons transferred, four hydrogen ions are translocated across the cytoplasmic membrane), and thus conserves the redox energy in a proton gradient. This subunit may bind ubiquinone. In Dechloromonas aromatica (strain RCB), this protein is NADH-quinone oxidoreductase subunit H.